A 473-amino-acid chain; its full sequence is MKTLYSLRRSYPVETLFNGTIALAGRDQETTGFAWWAGNARLINLSGKLLGAHVAHAGLIVFWAGAMNLFEVAHFVPEKPMYEQGLILLPHLATLGWGVGPGGEIVDTFPYFVSGVLHLISSAVLGFGGIYHALIGPETLEESFPFFGYVWKDRNKMTTILGIHLILLGVGAFLPVLKALYFGGVYDTWAPGGGDVRKITNPTLNPSAIFGYLLKSPFGGEGWIVSVDNLEDVIGGHVWLGSICIFGGIWHILTKPFAWARRAFVWSGEAYLSYSLAALSLFGFIACCFVWFNNTVYPSEFYGPTGPEASQAQAFTFLVRDQRLGASVGSAQGPTGLGKYLMRSPTGEIIFGGETMRFWDLRAPWLEPLRGPNGLDLSKLKKDIQPWQERRSAEYMTHAPLGSLNSVGGVATEINAVNYVSPRSWLSTSHFVLGFFFFVGHLWHAGRARAAAAGFEKGIDRDFEPVLSMTPLN.

The propeptide occupies 1 to 14 (MKTLYSLRRSYPVE). Thr15 carries the N-acetylthreonine modification. Thr15 carries the phosphothreonine modification. The next 5 helical transmembrane spans lie at 69–93 (LFEVAHFVPEKPMYEQGLILLPHLA), 134–155 (LIGPETLEESFPFFGYVWKDRN), 178–200 (KALYFGGVYDTWAPGGGDVRKIT), 255–275 (KPFAWARRAFVWSGEAYLSYS), and 291–312 (WFNNTVYPSEFYGPTGPEASQA). Residue Glu367 coordinates [CaMn4O5] cluster. The chain crosses the membrane as a helical span at residues 447–471 (RARAAAAGFEKGIDRDFEPVLSMTP).

Belongs to the PsbB/PsbC family. PsbC subfamily. As to quaternary structure, PSII is composed of 1 copy each of membrane proteins PsbA, PsbB, PsbC, PsbD, PsbE, PsbF, PsbH, PsbI, PsbJ, PsbK, PsbL, PsbM, PsbT, PsbX, PsbY, PsbZ, Psb30/Ycf12, at least 3 peripheral proteins of the oxygen-evolving complex and a large number of cofactors. It forms dimeric complexes. The cofactor is Binds multiple chlorophylls and provides some of the ligands for the Ca-4Mn-5O cluster of the oxygen-evolving complex. It may also provide a ligand for a Cl- that is required for oxygen evolution. PSII binds additional chlorophylls, carotenoids and specific lipids..

It is found in the plastid. Its subcellular location is the chloroplast thylakoid membrane. Its function is as follows. One of the components of the core complex of photosystem II (PSII). It binds chlorophyll and helps catalyze the primary light-induced photochemical processes of PSII. PSII is a light-driven water:plastoquinone oxidoreductase, using light energy to abstract electrons from H(2)O, generating O(2) and a proton gradient subsequently used for ATP formation. This chain is Photosystem II CP43 reaction center protein, found in Pinus koraiensis (Korean pine).